The following is a 409-amino-acid chain: DNA primase small subunit (409 aa).

Residues Glu-46, Asp-111, and Asp-113 contribute to the active site. The Zinc knuckle motif motif lies at 123–133 (CCSGAQVCSKC).

This sequence belongs to the eukaryotic-type primase small subunit family. As to quaternary structure, DNA polymerase alpha:primase is a four subunit enzyme complex, which is assembled throughout the cell cycle, and consists of the two DNA polymerase subunits A POL1 and B POL12, and the DNA primase large PRI2 and small PRI1 subunits.

Functionally, DNA primase is the polymerase that synthesizes small RNA primers for the Okazaki fragments made during discontinuous DNA replication. In a complex with DNA polymerase alpha (DNA polymerase alpha:primase) constitutes a replicative polymerase. Both primase components participate in formation of the active center, but the ATP-binding site is exclusively located on p48. The protein is DNA primase small subunit (PRI1) of Saccharomyces cerevisiae (strain ATCC 204508 / S288c) (Baker's yeast).